Reading from the N-terminus, the 319-residue chain is G-protein coupled receptor 171 (319 aa).

Residues 1-21 (MTNSSFFCPVYKDLEPFTYFF) are Extracellular-facing. Asparagine 3 is a glycosylation site (N-linked (GlcNAc...) asparagine). The chain crosses the membrane as a helical span at residues 22–42 (YLVFLVGIIGSCFATWAFIQK). The Cytoplasmic portion of the chain corresponds to 43–48 (NTNHRC). A helical transmembrane segment spans residues 49–69 (VSIYLINLLTADFLLTLALPV). Residues 70 to 89 (KIVVDLGVAPWKLKIFHCQV) are Extracellular-facing. The helical transmembrane segment at 90–110 (TACLIYINMYLSIIFLAFVSI) threads the bilayer. Residues 111-132 (DRCLQLTHSCKIYRIQEPGFAK) lie on the Cytoplasmic side of the membrane. A helical transmembrane segment spans residues 133–153 (MISTVVWLMVLLIMVPNMMIP). Over 154–181 (IKDIKEKSNVGCMEFKKEFGRNWHLLTN) the chain is Extracellular. The chain crosses the membrane as a helical span at residues 182 to 202 (FICVAIFLNFSAIILISNCLV). Residues 203–224 (IRQLYRNKDNENYPNVKKALIN) are Cytoplasmic-facing. The chain crosses the membrane as a helical span at residues 225 to 245 (ILLVTTGYIICFVPYHIVRIP). Residues 246 to 268 (YTLSQTEVITDCSTRISLFKAKE) are Extracellular-facing. The chain crosses the membrane as a helical span at residues 269–289 (ATLLLAVSNLCFDPILYYHLS). The Cytoplasmic segment spans residues 290–319 (KAFRSKVTETFASPKETKAQKEKLRCENNA).

It belongs to the G-protein coupled receptor 1 family. As to expression, expressed in both T-cell subsets and natural killer cells, while it is undetectable in B cells or CD14(+) monocytes. Expressed in peripheral blood mononuclear cells (PBMC) and Jurkat cells (at protein level).

It localises to the cell membrane. Its function is as follows. G-protein coupled receptor for Big LEN, a 16-amino acid neuropeptide produced from the precursor protein, proSAAS (encoded by PCSK1N). Acts through a G(i)-alpha-mediated pathway in response to Big LEN. Big LEN-GPR171 system plays an important role in regulating feeding and metabolism. Also plays a role in modulating fear and anxiety-like behaviors in the basolateral amygdala. Big LEN-GPR171 modulates the mu-type opioid receptor signaling and antinociception. Acts as a negative regulator T cell function. This chain is G-protein coupled receptor 171, found in Homo sapiens (Human).